A 345-amino-acid polypeptide reads, in one-letter code: Probable velvet family sexual development regulator LACBIDRAFT_317102 (345 aa).

Polar residues-rich tracts occupy residues methionine 1–serine 13 and glutamate 24–arginine 38. Disordered stretches follow at residues methionine 1–arginine 43, glutamate 138–serine 189, and arginine 310–aspartate 345. One can recognise a Velvet domain in the interval glycine 62 to arginine 306. Low complexity-rich tracts occupy residues threonine 141 to serine 158 and serine 167 to proline 184. The segment covering serine 336–aspartate 345 has biased composition (acidic residues).

The protein belongs to the velvet family.

It localises to the nucleus. Functionally, velvet-domain-containing protein that probably acts as a positive regulator of sexual development. The polypeptide is Probable velvet family sexual development regulator LACBIDRAFT_317102 (Laccaria bicolor (strain S238N-H82 / ATCC MYA-4686) (Bicoloured deceiver)).